Here is a 377-residue protein sequence, read N- to C-terminus: Carboxynorspermidine/carboxyspermidine decarboxylase (377 aa).

Lys41 is modified (N6-(pyridoxal phosphate)lysine). Residues Glu238 and Asp274 each contribute to the substrate site.

It belongs to the Orn/Lys/Arg decarboxylase class-II family. NspC subfamily. As to quaternary structure, homodimer. Pyridoxal 5'-phosphate serves as cofactor.

It localises to the cytoplasm. It catalyses the reaction carboxynorspermidine + H(+) = norspermidine + CO2. The catalysed reaction is carboxyspermidine + H(+) = spermidine + CO2. Functionally, catalyzes the decarboxylation of carboxynorspermidine and carboxyspermidine. Carboxynorspermidine is decarboxylated 20-fold more efficiently than carboxyspermidine. Exhibits some activity with L-ornithine, but shows no activity with L-arginine, L-lysine or meso-diaminopimelate. This is Carboxynorspermidine/carboxyspermidine decarboxylase from Vibrio vulnificus (strain CMCP6).